We begin with the raw amino-acid sequence, 741 residues long: Homeobox protein AHox1 (741 aa).

Disordered regions lie at residues 1-30, 61-96, 146-183, 203-226, 357-383, 476-501, and 616-642; these read MEKM…KSSS, KRRL…NFCR, VNPL…KSCC, ADSD…INQD, KTEE…PIRT, FDFP…NPQT, and QYGH…GTVK. Residues 7–19 show a composition bias toward low complexity; the sequence is KSVSPVPFNNSNN. Basic and acidic residues predominate over residues 63 to 78; sequence RLLDPQNKKKQNRFER. The span at 79–92 shows a compositional bias: polar residues; sequence YSSSNHAQEQSSEE. Low complexity predominate over residues 169 to 181; the sequence is SFSSSSEASDSKS. Over residues 363–375 the composition is skewed to polar residues; that stretch reads RSPSETKQYSPDA. Positions 616-629 are enriched in polar residues; sequence QYGHMSSSQNPHSE. A compositionally biased stretch (basic and acidic residues) spans 630–639; that stretch reads TQNRSEEVRG. A DNA-binding region (homeobox) is located at residues 645-704; that stretch reads RKWNRAVFSLMQRRGLEKSFQSQKYVAKPERRKLADALSLTDAQVKIWFQNRRMKWRQEI. A disordered region spans residues 722–741; sequence EIEKEKTQTPSDEGEVINVD.

It belongs to the H2.0 homeobox family. As to expression, expressed in the tissues of endodermal origin.

Its subcellular location is the nucleus. The sequence is that of Homeobox protein AHox1 (AHOX1) from Halocynthia roretzi (Sea squirt).